The following is a 327-amino-acid chain: Ferrochelatase 2 (327 aa).

Fe cation is bound by residues His201 and Glu282.

This sequence belongs to the ferrochelatase family.

It localises to the cytoplasm. It carries out the reaction heme b + 2 H(+) = protoporphyrin IX + Fe(2+). The protein operates within porphyrin-containing compound metabolism; protoheme biosynthesis; protoheme from protoporphyrin-IX: step 1/1. In terms of biological role, catalyzes the ferrous insertion into protoporphyrin IX. The protein is Ferrochelatase 2 of Shewanella oneidensis (strain ATCC 700550 / JCM 31522 / CIP 106686 / LMG 19005 / NCIMB 14063 / MR-1).